The sequence spans 1022 residues: GPI ethanolamine phosphate transferase 1 (1022 aa).

At 1–6 the chain is on the cytoplasmic side; sequence MARVGR. A helical transmembrane segment spans residues 7–27; the sequence is VGFLTLAVVFHLMYAYSIFDI. The Lumenal segment spans residues 28–466; it reads YFVSPIVSGM…LQTYDWLFLR (439 aa). N-linked (GlcNAc...) asparagine glycosylation is found at N148 and N433. A helical transmembrane segment spans residues 467–487; it reads TIVSLGYLGWIAYALTTVIDL. At 488–498 the chain is on the cytoplasmic side; the sequence is HVLHGKSESNR. A helical transmembrane segment spans residues 499 to 519; sequence TTFSIMFFSSILVALFSVLLY. Residues 520–560 lie on the Lumenal side of the membrane; the sequence is QGSSWRYYLYALFPIFFWEEVFARRKALLAGREILLGHVHS. The chain crosses the membrane as a helical span at residues 561–581; that stretch reads VSGYFAFAIQLLLYVGVLEAL. The Cytoplasmic portion of the chain corresponds to 582–589; sequence VQSYFHRD. A helical membrane pass occupies residues 590–610; that stretch reads IFTVCFILGGFWPITYGTKFL. At 611–614 the chain is on the lumenal side; sequence GQHK. The chain crosses the membrane as a helical span at residues 615–635; it reads LLSASWALGCFLMSIFTLLPA. At 636–640 the chain is on the cytoplasmic side; sequence NKVED. A helical transmembrane segment spans residues 641-661; it reads MMMISCGSLLMFLTGLLYLIF. Residues 662-685 are Lumenal-facing; it reads ERSILGQKRSSDPNSVVSSCGSRT. Residues 686-706 traverse the membrane as a helical segment; it reads IMGAQVGMILLALIVTRSSVA. The Cytoplasmic portion of the chain corresponds to 707–713; that stretch reads SLQAKQG. The chain crosses the membrane as a helical span at residues 714 to 734; the sequence is LPLGNQVLGWAILVSSLLLPF. Over 735–749 the chain is Lumenal; the sequence is LHRLYPNSHYLHRLM. 2 consecutive transmembrane segments (helical) span residues 750 to 770 and 771 to 791; these read VIFLTFSPIFIILTISYEGLF and YFVFCMTLLAWVRLEQAIYIH. Over 792–837 the chain is Lumenal; that stretch reads TTAPTREQDHSVANGSLPAKKPSPGNTVVVEGQPYRYRTLSVSDAR. N805 is a glycosylation site (N-linked (GlcNAc...) asparagine). A helical transmembrane segment spans residues 838 to 858; the sequence is VALFFFFLLQSGFFSTGNIAS. Over 859-880 the chain is Cytoplasmic; that stretch reads VSSFSLDSVYRLIPIFNPFAQG. A helical transmembrane segment spans residues 881–901; that stretch reads ALLILKLLIPFAIISANLGIL. The Lumenal segment spans residues 902–910; that stretch reads NHRLEVAPS. Residues 911–931 traverse the membrane as a helical segment; the sequence is ALFMVVMSISDVMTLNFFYMV. Residues 932–947 lie on the Cytoplasmic side of the membrane; that stretch reads RDEGSWLEIGTTISHF. A helical transmembrane segment spans residues 948-968; that stretch reads CIASFLCTFVAVLEFLSELFI. Topologically, residues 969-1022 are lumenal; sequence SGVDFGHPATTVGSAVAKAVNGSVACGHSPDSDISGEDSTSVGITAKADPDARS. N989 carries N-linked (GlcNAc...) asparagine glycosylation. The interval 998–1022 is disordered; sequence PDSDISGEDSTSVGITAKADPDARS.

The protein belongs to the PIGG/PIGN/PIGO family. PIGN subfamily.

The protein resides in the endoplasmic reticulum membrane. Its pathway is glycolipid biosynthesis; glycosylphosphatidylinositol-anchor biosynthesis. In terms of biological role, ethanolamine phosphate transferase involved in glycosylphosphatidylinositol-anchor biosynthesis. Transfers ethanolamine phosphate to the first alpha-1,4-linked mannose of the glycosylphosphatidylinositol precursor of GPI-anchor. This Aspergillus oryzae (strain ATCC 42149 / RIB 40) (Yellow koji mold) protein is GPI ethanolamine phosphate transferase 1 (mcd4).